The following is a 201-amino-acid chain: Large ribosomal subunit protein eL15 (201 aa).

The protein belongs to the eukaryotic ribosomal protein eL15 family.

In Quercus suber (Cork oak), this protein is Large ribosomal subunit protein eL15 (RPL15).